The chain runs to 139 residues: Large ribosomal subunit protein uL16 (139 aa).

This sequence belongs to the universal ribosomal protein uL16 family. Part of the 50S ribosomal subunit.

Functionally, binds 23S rRNA and is also seen to make contacts with the A and possibly P site tRNAs. This chain is Large ribosomal subunit protein uL16, found in Gloeothece citriformis (strain PCC 7424) (Cyanothece sp. (strain PCC 7424)).